A 195-amino-acid polypeptide reads, in one-letter code: Segregation and condensation protein B (195 aa).

It belongs to the ScpB family. In terms of assembly, homodimer. Homodimerization may be required to stabilize the binding of ScpA to the Smc head domains. Component of a cohesin-like complex composed of ScpA, ScpB and the Smc homodimer, in which ScpA and ScpB bind to the head domain of Smc. The presence of the three proteins is required for the association of the complex with DNA.

The protein localises to the cytoplasm. Its function is as follows. Participates in chromosomal partition during cell division. May act via the formation of a condensin-like complex containing Smc and ScpA that pull DNA away from mid-cell into both cell halves. This is Segregation and condensation protein B from Clostridium perfringens (strain SM101 / Type A).